Reading from the N-terminus, the 566-residue chain is Beta,beta-carotene 15,15'-dioxygenase (566 aa).

Positions 172, 237, 308, and 514 each coordinate Fe cation. Positions 529 to 566 are disordered; the sequence is TPAKTQEDENSDHPTGLTAPGLGHGENDFTAGHGGKSL.

It belongs to the carotenoid oxygenase family. Fe(2+) serves as cofactor.

The protein resides in the cytoplasm. The protein localises to the cytosol. It carries out the reaction all-trans-beta-carotene + O2 = 2 all-trans-retinal. It functions in the pathway cofactor metabolism; retinol metabolism. Its function is as follows. Symmetrically cleaves beta-carotene into two molecules of retinal using a dioxygenase mechanism. This is Beta,beta-carotene 15,15'-dioxygenase from Rattus norvegicus (Rat).